A 396-amino-acid polypeptide reads, in one-letter code: Adenosine 3'-phospho 5'-phosphosulfate transporter 2 (396 aa).

A disordered region spans residues 22–42 (NGGESAGNSPPSQRKSSTSES). The segment covering 27–42 (AGNSPPSQRKSSTSES) has biased composition (polar residues). Phosphoserine is present on residues serine 37 and serine 40. A glycan (N-linked (GlcNAc...) asparagine) is linked at asparagine 57. The next 10 helical transmembrane spans lie at 66–86 (CAGV…IFTV), 91–111 (PYGW…GLVE), 140–160 (LILA…LGYL), 163–183 (PTQV…SILI), 189–209 (GLLD…FTLA), 216–236 (NFNL…AAIG), 253–273 (VVFY…LVTG), 290–310 (FGYG…VLAL), 318–338 (IAAT…FVLF), and 342–362 (FTLQ…LNVY).

Belongs to the nucleotide-sugar transporter family. SLC35B subfamily.

It localises to the golgi apparatus membrane. Its function is as follows. Mediates the transport of adenosine 3'-phospho 5'-phosphosulfate (PAPS), from cytosol into Golgi. PAPS is a universal sulfuryl donor for sulfation events that take place in the Golgi. Essential for viability. Involved in glycosaminoglycan synthesis and the subsequent signaling. May be involved in hh and dpp signaling by controlling the sulfation of heparan sulfate (HS). The chain is Adenosine 3'-phospho 5'-phosphosulfate transporter 2 (Papst2) from Drosophila melanogaster (Fruit fly).